The sequence spans 1125 residues: RGS domain-containing serine/threonine-protein kinase A (1125 aa).

Disordered stretches follow at residues 1 to 77 (MKTS…GGNK), 96 to 191 (RRNS…IVDD), 276 to 416 (GISP…NNTN), and 455 to 480 (YVGGNKGSEDRRKKIEQKKKQVPAPE). 2 stretches are compositionally biased toward low complexity: residues 7–30 (SSNSNSNNNNNNNNNNNNNNNNNN) and 37–66 (SSKSLSPPTSPKQMSGNSIISNSTGNLSSG). Over residues 121 to 136 (LDSKPPKPFDEKDDPI) the composition is skewed to basic and acidic residues. Low complexity-rich tracts occupy residues 159 to 191 (QPQQTQQQSSGENLNNSSDRNNNSNENNQIVDD) and 281 to 342 (NNNN…LNNS). Polar residues predominate over residues 343 to 361 (PRYLNSSSSPRSMQHLSSK). Residues 362–416 (ITTTTTTTTTTTTTTSDDNNGNTNNNISNNNNIINNSNNNSNSNNNNNNNINNTN) are compositionally biased toward low complexity. The region spanning 487 to 603 (KFIETITDPT…ISSPFNPEWK (117 aa)) is the RGS domain. A compositionally biased stretch (low complexity) spans 617–685 (TTTQPINNFN…NNSNGSNTSS (69 aa)). Disordered stretches follow at residues 617–710 (TTTQ…KERS) and 723–762 (NLSNHSNSSSNSNGKDKDKDKDKNENTTDNSNNNNNSNNN). A compositionally biased stretch (basic and acidic residues) spans 690–710 (ERLDNIKGNRERVDSNGKERS). The span at 723 to 735 (NLSNHSNSSSNSN) shows a compositional bias: low complexity. The span at 736–748 (GKDKDKDKDKNEN) shows a compositional bias: basic and acidic residues. The segment covering 749 to 762 (TTDNSNNNNNSNNN) has biased composition (low complexity). In terms of domain architecture, Protein kinase spans 842–1097 (VSIHKWIASG…YLESIIYPSV (256 aa)). ATP-binding positions include 848 to 856 (IASGSSGRV) and Lys869. Asp963 acts as the Proton acceptor in catalysis.

The protein belongs to the protein kinase superfamily. TKL Ser/Thr protein kinase family. Autophosphorylated.

It is found in the cytoplasm. The protein resides in the cell membrane. The enzyme catalyses L-seryl-[protein] + ATP = O-phospho-L-seryl-[protein] + ADP + H(+). It carries out the reaction L-threonyl-[protein] + ATP = O-phospho-L-threonyl-[protein] + ADP + H(+). With respect to regulation, up-regulated by cAMP. Functionally, serine/threonine kinase involved in negative regulation of chemotaxis. In Dictyostelium discoideum (Social amoeba), this protein is RGS domain-containing serine/threonine-protein kinase A (rckA).